Reading from the N-terminus, the 557-residue chain is Formate--tetrahydrofolate ligase (557 aa).

ATP is bound at residue 67-74 (TPAGEGKT).

It belongs to the formate--tetrahydrofolate ligase family.

The catalysed reaction is (6S)-5,6,7,8-tetrahydrofolate + formate + ATP = (6R)-10-formyltetrahydrofolate + ADP + phosphate. It participates in one-carbon metabolism; tetrahydrofolate interconversion. The sequence is that of Formate--tetrahydrofolate ligase from Cereibacter sphaeroides (strain ATCC 17029 / ATH 2.4.9) (Rhodobacter sphaeroides).